Here is a 404-residue protein sequence, read N- to C-terminus: Argininosuccinate synthase (404 aa).

ATP is bound by residues 12-20 (AYSGGLDTS) and alanine 39. Tyrosine 91 and serine 96 together coordinate L-citrulline. Residue glycine 121 coordinates ATP. The L-aspartate site is built by threonine 123, asparagine 127, and aspartate 128. L-citrulline is bound at residue asparagine 127. 5 residues coordinate L-citrulline: arginine 131, serine 180, serine 189, glutamate 265, and tyrosine 277.

It belongs to the argininosuccinate synthase family. Type 1 subfamily. In terms of assembly, homotetramer.

The protein localises to the cytoplasm. The catalysed reaction is L-citrulline + L-aspartate + ATP = 2-(N(omega)-L-arginino)succinate + AMP + diphosphate + H(+). It functions in the pathway amino-acid biosynthesis; L-arginine biosynthesis; L-arginine from L-ornithine and carbamoyl phosphate: step 2/3. The polypeptide is Argininosuccinate synthase (Vibrio cholerae serotype O1 (strain ATCC 39541 / Classical Ogawa 395 / O395)).